The primary structure comprises 316 residues: Prenytransferase adrG (316 aa).

The next 7 membrane-spanning stretches (helical) occupy residues 36–56 (LLGF…CASI), 60–80 (KIPI…SIFL), 131–151 (VLIY…FFAL), 163–183 (PQIT…SLGL), 191–211 (PTVC…VIYS), 247–267 (GFLA…VVSV), and 294–314 (KSAF…EYCL).

This sequence belongs to the UbiA prenyltransferase family. It depends on Mg(2+) as a cofactor.

Its subcellular location is the membrane. It catalyses the reaction 3,5-dimethylorsellinate + (2E,6E)-farnesyl diphosphate = (3R)-3-farnesyl-6-hydroxy-2,3,5-trimethyl-4-oxocyclohexa-1,5-diene-1-carboxylate + diphosphate + H(+). It participates in secondary metabolite biosynthesis; terpenoid biosynthesis. In terms of biological role, prenytransferase; part of the gene cluster that mediates the biosynthesis of andrastins, meroterpenoid compounds that exhibit inhibitory activity against ras farnesyltransferase, suggesting that they could be promising leads for antitumor agents. The first step of the pathway is the synthesis of 3,5-dimethylorsellinic acid (DMOA) by the polyketide synthase adrD via condensation of one acetyl-CoA starter unit with 3 malonyl-CoA units and 2 methylations. DMAO is then converted to farnesyl-DMAO by the prenyltransferase adrG. The methyltransferase adrK catalyzes the methylation of the carboxyl group of farnesyl-DMAO to farnesyl-DMAO methyl ester which is further converted to epoxyfarnesyl-DMAO methyl ester by the FAD-dependent monooxygenase adrH. The terpene cyclase adrI then catalyzes the carbon skeletal rearrangement to generate the andrastin E, the first compound in the pathway having the andrastin scaffold, with the tetracyclic ring system. The post-cyclization tailoring enzymes adrF, adrE, adrJ, and adrA, are involved in the conversion of andrastin E into andrastin A. The short chain dehydrogenase adrF is responsible for the oxidation of the C-3 a hydroxyl group of andrastin E to yield the corresponding ketone, andrastin D. The ketoreductase adrE stereoselectively reduces the carbonyl moiety to reverse the stereochemistry of the C-3 position to yield andrastin F. The acetyltransferase adrJ is the acetyltransferase that attaches the acetyl group to the C-3 hydroxyl group of andrastin F to yield andrastin C. Finally, the cytochrome P450 monooxygenase adrA catalyzes two sequential oxidation reactions of the C-23 methyl group, to generate the corresponding alcohol andrastin B, and aldehyde andrastin A. This Penicillium roqueforti protein is Prenytransferase adrG.